The primary structure comprises 606 residues: Endonuclease 8-like 3 (606 aa).

Valine 2 serves as the catalytic Schiff-base intermediate with DNA; via amino nitrogen. Residues asparagine 193 and arginine 272 each coordinate DNA. An FPG-type zinc finger spans residues 248–282; the sequence is KVYKRPNCDQCHSKITVCRFGENSRMTYFCPHCQK. The segment at 318-347 adopts a RanBP2-type zinc-finger fold; the sequence is SEEQWSCVVCTLINRPSAKACDACLTTRPL. Serine 451 is subject to Phosphoserine. The span at 479-494 shows a compositional bias: polar residues; it reads KSYNSGLSNSELQTNR. The segment at 479-506 is disordered; it reads KSYNSGLSNSELQTNRTRGHHSKSDGSP. Cysteine 508, histidine 511, cysteine 534, cysteine 542, cysteine 555, histidine 557, cysteine 580, and cysteine 588 together coordinate Zn(2+). 2 consecutive GRF-type zinc fingers follow at residues 508–551 and 555–597; these read CKMH…ADLS and CRHG…AENG.

The protein belongs to the FPG family. In terms of tissue distribution, expressed in testis, thymus, spleen and bone marrow. In young mice, expressed at higher levels in thymocytes than splenocytes. At 12 dpc, abundant in the subventricular zone (SVZ) of the lateral ventricles. At 17.5 dpc and P0, expression is limited to distinct cells in the cortical SVZ, in cells of the secondary matrix, the dentate gyrus migratory route and the dentate gyrus.

Its subcellular location is the nucleus. The protein localises to the chromosome. It carries out the reaction 2'-deoxyribonucleotide-(2'-deoxyribose 5'-phosphate)-2'-deoxyribonucleotide-DNA = a 3'-end 2'-deoxyribonucleotide-(2,3-dehydro-2,3-deoxyribose 5'-phosphate)-DNA + a 5'-end 5'-phospho-2'-deoxyribonucleoside-DNA + H(+). Functionally, DNA glycosylase which prefers single-stranded DNA (ssDNA), or partially ssDNA structures such as bubble and fork structures, to double-stranded DNA (dsDNA). Mediates interstrand cross-link repair in response to replication stress: acts by mediating DNA glycosylase activity, cleaving one of the two N-glycosyl bonds comprising the interstrand cross-link, which avoids the formation of a double-strand break but generates an abasic site that is bypassed by translesion synthesis polymerases. In vitro, displays strong glycosylase activity towards the hydantoin lesions spiroiminodihydantoin (Sp) and guanidinohydantoin (Gh) in both ssDNA and dsDNA; also recognizes FapyA, FapyG, 5-OHU, 5-OHC, 5-OHMH, Tg and 8-oxoA lesions in ssDNA. No activity on 8-oxoG detected. Also shows weak DNA-(apurinic or apyrimidinic site) lyase activity. In vivo, appears to be the primary enzyme involved in removing Sp and Gh from ssDNA in neonatal tissues. This is Endonuclease 8-like 3 (Neil3) from Mus musculus (Mouse).